The primary structure comprises 56 residues: Cytochrome b-c1 complex subunit 10 (56 aa).

Residues methionine 1–glutamine 12 are Mitochondrial matrix-facing. A helical transmembrane segment spans residues leucine 13–alanine 35. At threonine 36–aspartate 56 the chain is on the mitochondrial intermembrane side.

Belongs to the UQCR11/QCR10 family. In terms of assembly, component of the ubiquinol-cytochrome c oxidoreductase (cytochrome b-c1 complex, complex III, CIII), a multisubunit enzyme composed of 11 subunits. The complex is composed of 3 respiratory subunits cytochrome b, cytochrome c1 and Rieske protein UQCRFS1, 2 core protein subunits UQCRC1/QCR1 and UQCRC2/QCR2, and 6 low-molecular weight protein subunits UQCRH/QCR6, UQCRB/QCR7, UQCRQ/QCR8, UQCR10/QCR9, UQCR11/QCR10 and subunit 9, the cleavage product of Rieske protein UQCRFS1. The complex exists as an obligatory dimer and forms supercomplexes (SCs) in the inner mitochondrial membrane with NADH-ubiquinone oxidoreductase (complex I, CI) and cytochrome c oxidase (complex IV, CIV), resulting in different assemblies (supercomplex SCI(1)III(2)IV(1) and megacomplex MCI(2)III(2)IV(2)).

It localises to the mitochondrion inner membrane. Component of the ubiquinol-cytochrome c oxidoreductase, a multisubunit transmembrane complex that is part of the mitochondrial electron transport chain which drives oxidative phosphorylation. The respiratory chain contains 3 multisubunit complexes succinate dehydrogenase (complex II, CII), ubiquinol-cytochrome c oxidoreductase (cytochrome b-c1 complex, complex III, CIII) and cytochrome c oxidase (complex IV, CIV), that cooperate to transfer electrons derived from NADH and succinate to molecular oxygen, creating an electrochemical gradient over the inner membrane that drives transmembrane transport and the ATP synthase. The cytochrome b-c1 complex catalyzes electron transfer from ubiquinol to cytochrome c, linking this redox reaction to translocation of protons across the mitochondrial inner membrane, with protons being carried across the membrane as hydrogens on the quinol. In the process called Q cycle, 2 protons are consumed from the matrix, 4 protons are released into the intermembrane space and 2 electrons are passed to cytochrome c. QCR10 has a role in CIII assembly and RIP1 stability. This chain is Cytochrome b-c1 complex subunit 10 (UQCR11), found in Bos taurus (Bovine).